Here is a 355-residue protein sequence, read N- to C-terminus: Ubiquinone biosynthesis protein COQ4 homolog, mitochondrial (355 aa).

Histidine 134, aspartate 135, histidine 138, and glutamate 150 together coordinate Zn(2+).

This sequence belongs to the COQ4 family. As to quaternary structure, component of a multi-subunit COQ enzyme complex. Zn(2+) is required as a cofactor.

The protein resides in the mitochondrion inner membrane. The enzyme catalyses a 4-hydroxy-3-methoxy-5-(all-trans-polyprenyl)benzoate + H(+) = a 2-methoxy-6-(all-trans-polyprenyl)phenol + CO2. It participates in cofactor biosynthesis; ubiquinone biosynthesis. In terms of biological role, lyase that catalyzes the C1-decarboxylation of 4-hydroxy-3-methoxy-5-(all-trans-polyprenyl)benzoic acid into 2-methoxy-6-(all-trans-polyprenyl)phenol during ubiquinone biosynthesis. This chain is Ubiquinone biosynthesis protein COQ4 homolog, mitochondrial, found in Plasmodium knowlesi (strain H).